A 68-amino-acid polypeptide reads, in one-letter code: Alpha-conotoxin-like Mr1.2 (68 aa).

Residues 1–21 (MGMRMMFTVFLLVVLATTVVS) form the signal peptide. Residues 22-48 (FTSDRGSDGRNAAAKDKASDLVALTVK) constitute a propeptide that is removed on maturation. Intrachain disulfides connect Cys50-Cys56 and Cys51-Cys64. Positions 52-54 (SNP) are ser-Xaa-Pro motif, crucial for potent interaction with nAChR. Asn65 is modified (asparagine amide).

This sequence belongs to the conotoxin A superfamily. As to expression, expressed by the venom duct.

Its subcellular location is the secreted. Alpha-conotoxins act on postsynaptic membranes, they bind to the nicotinic acetylcholine receptors (nAChR) and thus inhibit them. This is Alpha-conotoxin-like Mr1.2 from Conus marmoreus (Marble cone).